Here is a 388-residue protein sequence, read N- to C-terminus: Chorismate synthase (388 aa).

Residues R40 and R46 each contribute to the NADP(+) site. FMN is bound by residues 131–133, 252–253, G296, 311–315, and R337; these read RSS, NA, and KPIPT.

This sequence belongs to the chorismate synthase family. As to quaternary structure, homotetramer. Requires FMNH2 as cofactor.

The enzyme catalyses 5-O-(1-carboxyvinyl)-3-phosphoshikimate = chorismate + phosphate. It functions in the pathway metabolic intermediate biosynthesis; chorismate biosynthesis; chorismate from D-erythrose 4-phosphate and phosphoenolpyruvate: step 7/7. Catalyzes the anti-1,4-elimination of the C-3 phosphate and the C-6 proR hydrogen from 5-enolpyruvylshikimate-3-phosphate (EPSP) to yield chorismate, which is the branch point compound that serves as the starting substrate for the three terminal pathways of aromatic amino acid biosynthesis. This reaction introduces a second double bond into the aromatic ring system. This chain is Chorismate synthase, found in Limosilactobacillus fermentum (strain NBRC 3956 / LMG 18251) (Lactobacillus fermentum).